The sequence spans 358 residues: Isopentenyl-diphosphate delta-isomerase (358 aa).

Residue 12–13 (RK) participates in substrate binding. FMN contacts are provided by residues 69 to 71 (AMT), Ser99, and Asn128. Gln158 is a binding site for substrate. Residue Glu159 coordinates Mg(2+). FMN contacts are provided by residues Lys190, Thr220, 267-269 (GIR), and 288-289 (AG).

This sequence belongs to the IPP isomerase type 2 family. As to quaternary structure, homooctamer. Dimer of tetramers. FMN is required as a cofactor. It depends on NADPH as a cofactor. The cofactor is Mg(2+).

Its subcellular location is the cytoplasm. The catalysed reaction is isopentenyl diphosphate = dimethylallyl diphosphate. Its function is as follows. Involved in the biosynthesis of isoprenoids. Catalyzes the 1,3-allylic rearrangement of the homoallylic substrate isopentenyl (IPP) to its allylic isomer, dimethylallyl diphosphate (DMAPP). The sequence is that of Isopentenyl-diphosphate delta-isomerase from Listeria monocytogenes serovar 1/2a (strain ATCC BAA-679 / EGD-e).